The chain runs to 196 residues: Large ribosomal subunit protein bL25 (196 aa).

The segment at 177-196 is disordered; sequence VISIAPPKKDAEAETESAAG.

This sequence belongs to the bacterial ribosomal protein bL25 family. CTC subfamily. In terms of assembly, part of the 50S ribosomal subunit; part of the 5S rRNA/L5/L18/L25 subcomplex. Contacts the 5S rRNA. Binds to the 5S rRNA independently of L5 and L18.

Its function is as follows. This is one of the proteins that binds to the 5S RNA in the ribosome where it forms part of the central protuberance. The protein is Large ribosomal subunit protein bL25 of Chlorobium limicola (strain DSM 245 / NBRC 103803 / 6330).